The primary structure comprises 441 residues: MREIVHIQAGQCGNQIGAKFWEVISDEHGIDQSGTYHGDSDLQLERIDVFYNEATGGRYVPRAVLMDLEPGTMDSVRAGPFGQLFRPDNFVFGQTGAGNNWAKGHYTEGAELIDSVLDVVRKEAEGCDCLQGFQITHSLGGGTGSGMGTLLISKIREEYPDRIMETFSVFPSPKVSDTVVEPYNATLSVHQLVENADEVQVIDNEALYDICFRTLKLTTPTYGDLNHLVSAAMSGVTCSLRFPGQLNSDLRKLAVNLIPFPRLHFFMIGFAPLTSRGSQQHRALSVAELTQQMFDAKNMMCASDPRRGRYLTACAMFRGRMSTKEVDEQMSMVQNKNSSYFVEWIPHNTKSSVCDIPPKGLKMAVTFVGNSTAIQDMFKRVSEQFTAMFRRKAFLHWYTGEGMDEMEFTEAESNMNDLVSEYQQYQEATIDDDADDMVNDY.

GTP-binding residues include glutamine 11, glutamate 69, serine 138, glycine 142, threonine 143, glycine 144, asparagine 204, and asparagine 226. Glutamate 69 is a Mg(2+) binding site.

This sequence belongs to the tubulin family. As to quaternary structure, dimer of alpha and beta chains. A typical microtubule is a hollow water-filled tube with an outer diameter of 25 nm and an inner diameter of 15 nM. Alpha-beta heterodimers associate head-to-tail to form protofilaments running lengthwise along the microtubule wall with the beta-tubulin subunit facing the microtubule plus end conferring a structural polarity. Microtubules usually have 13 protofilaments but different protofilament numbers can be found in some organisms and specialized cells. It depends on Mg(2+) as a cofactor.

The protein resides in the cytoplasm. The protein localises to the cytoskeleton. Functionally, tubulin is the major constituent of microtubules, a cylinder consisting of laterally associated linear protofilaments composed of alpha- and beta-tubulin heterodimers. Microtubules grow by the addition of GTP-tubulin dimers to the microtubule end, where a stabilizing cap forms. Below the cap, tubulin dimers are in GDP-bound state, owing to GTPase activity of alpha-tubulin. In Babesia bovis, this protein is Tubulin beta chain.